The following is a 64-amino-acid chain: Protein DsrB (64 aa).

Belongs to the DsrB family.

The protein is Protein DsrB of Salmonella enteritidis PT4 (strain P125109).